We begin with the raw amino-acid sequence, 463 residues long: UDP-N-acetylmuramate--L-alanine ligase (463 aa).

112–118 is an ATP binding site; it reads GTHGKTT.

Belongs to the MurCDEF family.

The protein resides in the cytoplasm. The enzyme catalyses UDP-N-acetyl-alpha-D-muramate + L-alanine + ATP = UDP-N-acetyl-alpha-D-muramoyl-L-alanine + ADP + phosphate + H(+). It functions in the pathway cell wall biogenesis; peptidoglycan biosynthesis. Functionally, cell wall formation. The chain is UDP-N-acetylmuramate--L-alanine ligase from Dechloromonas aromatica (strain RCB).